A 243-amino-acid chain; its full sequence is tRNA pseudouridine synthase A (243 aa).

D53 serves as the catalytic Nucleophile. Substrate is bound at residue Y111.

This sequence belongs to the tRNA pseudouridine synthase TruA family. In terms of assembly, homodimer.

The enzyme catalyses uridine(38/39/40) in tRNA = pseudouridine(38/39/40) in tRNA. Functionally, formation of pseudouridine at positions 38, 39 and 40 in the anticodon stem and loop of transfer RNAs. This is tRNA pseudouridine synthase A from Chlorobium limicola (strain DSM 245 / NBRC 103803 / 6330).